Consider the following 113-residue polypeptide: Death-associated protein-like 1.S (113 aa).

Positions 1–53 (MTKELKVQSSPQALKAGHLPAVKAGGMRVSKKQGNDENSAPEKNAKKTLQEKP) are disordered.

It belongs to the DAP-DAPL1 family. Associates with ribosomes; preventing translation. Interacts with eiF5a (eif5a and eif5a2); preventing translation.

In terms of biological role, ribosome-binding protein that promotes ribosome hibernation, a process during which ribosomes are stabilized in an inactive state and preserved from proteasomal degradation. Acts via its association with eiF5a (eif5a and eif5a2) at the polypeptide exit tunnel of the ribosome, preventing mRNA translation. Plays a key role in ribosome hibernation in the mature egg by preventing mRNA translation, leading to ribosome inactivation. Ribosomes, which are produced in large quantities during oogenesis, are stored and translationally repressed in the egg and early embryo. The chain is Death-associated protein-like 1.S (dapl1.S) from Xenopus laevis (African clawed frog).